The following is a 128-amino-acid chain: uncharacterized protein (128 aa).

Residues 95-123 (IIDFATAKRELDRLTEEIATLKGELAQDK) are a coiled coil.

It is found in the cellular thylakoid membrane. This is an uncharacterized protein from Synechocystis sp. (strain ATCC 27184 / PCC 6803 / Kazusa).